The primary structure comprises 254 residues: Syntaxin-6 (254 aa).

The Cytoplasmic segment spans residues 1-233 (MSMEDPFFVV…VSHMTSDRRQ (233 aa)). Positions 46-72 (TTNELRNNLRSIEWDLEDLDETISIVE) form a coiled coil. The disordered stretch occupies residues 103–138 (KDQMSNSSMQALAERKNRQALLGESSSQSWSSGPDK). Residues 162–224 (QLIVEQQDEQ…DNVMKKLAKV (63 aa)) form the t-SNARE coiled-coil homology domain. A helical; Anchor for type IV membrane protein membrane pass occupies residues 234-254 (WCAIIVLFVILLVVLVLFLVL).

Belongs to the syntaxin family.

The protein resides in the golgi apparatus membrane. It is found in the golgi apparatus. It localises to the trans-Golgi network membrane. The protein localises to the recycling endosome membrane. Functionally, SNARE promoting movement of transport vesicles to target membranes. Targets endosomes to the trans-Golgi network, and may therefore function in retrograde trafficking. Together with SNARE STX12, promotes movement of vesicles from endosomes to the cell membrane, and may therefore function in the endocytic recycling pathway. In Gallus gallus (Chicken), this protein is Syntaxin-6 (STX6).